An 858-amino-acid polypeptide reads, in one-letter code: MNPTDLHPIKERMQAARAAAIADFRQHLRPDPLLSELRRIVDQALRDLLKLCPLPAGATLAAVGGYGRGELYPHSDVDLLILLPRAPDGPDESAIETLVASLWDLGLEPGHSVRTLAECETEASADITVETALLESRWLAGSRSLMKQFETAMTARLDARAFFRAKRVEMQQRHARYQDTPYALEPNSKESPGGLRDLQVILWMARAAGFGRNWRAVAQAGLLTAPEARDLRRAEQAFKRLRIELHLLTRRREDRLLFDLQPTLAEVYGIATTTTRRASELLMQRYYWAARLVTQLNVILIQNIEERLFPRPESDARAIDEEFRSLHGRLDIIREDCFERNPTLLLRAFLVMQQHPGLSGMSARTLRAIWHSRHRIDAQFRRNPVNRKLFLQILQQPRGIVHELRRMTMLNILPRYLPVFRRIVGQMQHDLFHVYTVDQHTLAVIRNLRRFTMPEHASEYPLASQVMAGLDRHWLLYVAALFHDIAKGRGGDHSELGARDARRFAQEHGLAPEDAELVEFLVRQHLLMSAVAQKRDLSDPEVINEFARQVKDERHLNALYLLTVADIRGTSPKVWNAWKGKLLEDLYRLTLAALGGAQDTRTVLAERKEEAARLLRLAGLRDDARDAFWQQLDVAYFLRHDASEIAWHTRHLYYQVQPDKPVVKVRPTEEGSGLQIMVYTRDTPDLFMNTCAYFDGKAFSIQDARIHTTRQGWALDSFIVLPAEPLADLRAQAALVEHELAERLRQAQGGARLADVRVFHRNRQSRVSRVFPVMPQAELHPDERSQSWRLSVTATDRPGLLHALARVMAENGVNLIMAKIMTLGDRVEDVFIISGAVLERPRTQMQFEHAVLDALAGE.

The uridylyltransferase stretch occupies residues 1 to 318; sequence MNPTDLHPIK…FPRPESDARA (318 aa). Positions 319-674 are uridylyl-removing; that stretch reads IDEEFRSLHG…VRPTEEGSGL (356 aa). The HD domain maps to 437–559; that stretch reads VDQHTLAVIR…VKDERHLNAL (123 aa). 2 consecutive ACT domains span residues 675 to 756 and 789 to 858; these read QIMV…LADV and RLSV…LAGE.

It belongs to the GlnD family. The cofactor is Mg(2+).

The catalysed reaction is [protein-PII]-L-tyrosine + UTP = [protein-PII]-uridylyl-L-tyrosine + diphosphate. It carries out the reaction [protein-PII]-uridylyl-L-tyrosine + H2O = [protein-PII]-L-tyrosine + UMP + H(+). With respect to regulation, uridylyltransferase (UTase) activity is inhibited by glutamine, while glutamine activates uridylyl-removing (UR) activity. Modifies, by uridylylation and deuridylylation, the PII regulatory proteins (GlnB and homologs), in response to the nitrogen status of the cell that GlnD senses through the glutamine level. Under low glutamine levels, catalyzes the conversion of the PII proteins and UTP to PII-UMP and PPi, while under higher glutamine levels, GlnD hydrolyzes PII-UMP to PII and UMP (deuridylylation). Thus, controls uridylylation state and activity of the PII proteins, and plays an important role in the regulation of nitrogen assimilation and metabolism. This chain is Bifunctional uridylyltransferase/uridylyl-removing enzyme, found in Bordetella avium (strain 197N).